Reading from the N-terminus, the 89-residue chain is Myrmicitoxin(1)-Pr2c (89 aa).

An N-terminal signal peptide occupies residues 1–23 (MEIPKLLYIAVIAIGLSGSLTCA). A propeptide spanning residues 24–61 (TPLANPWADPEAEANPKAKATAEATAEAIAEALAEPEP) is cleaved from the precursor. Residue asparagine 88 is modified to Asparagine amide.

The protein belongs to the formicidae venom clade 1 family. In terms of tissue distribution, expressed by the venom gland.

The protein resides in the secreted. Its function is as follows. Vertebrate-selective toxin that causes pain by targeting voltage-gated sodium channels. The chain is Myrmicitoxin(1)-Pr2c from Pogonomyrmex rugosus (Desert harvester ant).